The sequence spans 666 residues: MCLRRKLANAIRALSIDAVQEAQSGHPGMPMGMADIAEVLWREFFKHNPKNPLWNNRDRFILSNGHGSMLLYSILHLTGYKLSIDDLKKFRQLGSNTPGHPEIGSTPGVEMTTGPLGQGLGAAVGMAIAERTLASTFNKPNYDIVDHYTWVFVGDGCLMEGISHEVCSLAGTFGLGKLIVFYDSNGISIDGKVEEWFTDDTENRFKAYNWHVVSNVDGHDYRSISSAIKDAILVKNKPSLIICKTIIGYGSPNKSGLETSHGAPLGENEVLLTKQKLGWTYPPFVIPQDVYDHWNFNLQGVILENEWNKKFQGYYNKYPDLANEYLRRISKNVPDKFVDNFNKFIKELYLCPKNIATRVASQNVLEFLGKSLPELIGGSADLAPSNLTMWSKSKSIKQDISGNYVHYGVREFGMTAISNGIAHYGGFIPYVATFLAFMDYARSAVRMSALMKTQNIFIYSHDSIGLGEDGPTHQPIEQLSALRFIPNVNVWRPCDQLETAIAWKNAIERKDGPTALILSRQILCQIDRSQEQINDIYRGGYIVNTTVRSPKVIIVATGSEVKIALDVSNILFKKGILVRVVSMPSTNVFDQQDNDYKEFIFPRCLVHRVAIEAGISDFWYKYVGLTGCIIGIDTFGESGSSDQLFSKFGFNSDIISEKIISYLKSS.

Histidine 26 serves as a coordination point for substrate. Thiamine diphosphate-binding positions include histidine 66 and 114–116 (GPL). Mg(2+) is bound at residue aspartate 155. Thiamine diphosphate contacts are provided by glycine 156 and asparagine 185. Positions 185 and 187 each coordinate Mg(2+). Substrate is bound by residues histidine 261, arginine 358, and serine 385. Histidine 261 serves as a coordination point for thiamine diphosphate. The active-site Proton donor is glutamate 411. Phenylalanine 437 is a binding site for thiamine diphosphate. Residues histidine 461, aspartate 469, and arginine 520 each contribute to the substrate site.

It belongs to the transketolase family. In terms of assembly, homodimer. Mg(2+) serves as cofactor. It depends on Ca(2+) as a cofactor. Mn(2+) is required as a cofactor. Requires Co(2+) as cofactor. The cofactor is thiamine diphosphate.

The enzyme catalyses D-sedoheptulose 7-phosphate + D-glyceraldehyde 3-phosphate = aldehydo-D-ribose 5-phosphate + D-xylulose 5-phosphate. Its function is as follows. Catalyzes the transfer of a two-carbon ketol group from a ketose donor to an aldose acceptor, via a covalent intermediate with the cofactor thiamine pyrophosphate. The sequence is that of Transketolase (tkt) from Buchnera aphidicola subsp. Baizongia pistaciae (strain Bp).